Consider the following 259-residue polypeptide: Undecaprenyl-diphosphatase 3 (259 aa).

8 helical membrane-spanning segments follow: residues 1 to 21 (MNWL…FLPI), 39 to 59 (AGLF…FIYY), 71 to 91 (FSKL…IGLL), 99 to 119 (ISKT…FLYM), 133 to 153 (ITYK…FPAI), 174 to 194 (AYFS…LQFV), 208 to 228 (SLIV…SWMI), and 236 to 256 (LKVF…LQFT).

It belongs to the UppP family.

The protein resides in the cell membrane. It catalyses the reaction di-trans,octa-cis-undecaprenyl diphosphate + H2O = di-trans,octa-cis-undecaprenyl phosphate + phosphate + H(+). Its function is as follows. Catalyzes the dephosphorylation of undecaprenyl diphosphate (UPP). Confers resistance to bacitracin. This is Undecaprenyl-diphosphatase 3 from Bacillus cereus (strain ATCC 10987 / NRS 248).